The following is a 204-amino-acid chain: MTPPPADDTSGKSGRRTELLDIAATLFAERGLRATTVRDIADAAGILSGSLYHHFDSKESMVDEILRGFLDDLFGKYREIVASGLDSRATLEALVTTSYEAIDASHSAVAIYQDEVKHLVANERFTYLSELNTEFRELWMGVLEAGVKDGSFRSDIDVELAFRFLRDTAWVAVRWYRPGGSVTVDTVAKQYLSIVLDGLASPHN.

Residues 13-73 (SGRRTELLDI…EILRGFLDDL (61 aa)) enclose the HTH tetR-type domain. Residues 36–55 (TVRDIADAAGILSGSLYHHF) constitute a DNA-binding region (H-T-H motif).

As to quaternary structure, homodimer.

Controls the expression of a small regulon that may play a role in the utilization of cholesterol. This Rhodococcus jostii (strain RHA1) protein is HTH-type transcriptional repressor KstR2 (kstR2).